Consider the following 332-residue polypeptide: MNRSSNVPRKGILKSGTRSLQKVRRVHFANARNARSLLSMLKDISAQIIQRAWLSHTNKMIFRLLKHAICAAEFYVTHEILKKVAPLEAKLIKDPTMQCKIRFRFRGETFPPFIVFKIFLHTDGHGYKYFSGKNVLMPSSKAVDDACKLMGERKFHRIIMEDERIFPKSKVTDIMDVVTMQDYVQYRSFFDEAPAFSGGRNNSWRKLNLENIPRTMLMYDIVHYSESGVISNRLRNEMKFLLQRPVTQEIHKHQLRIVSEIRGPYLTVQPLYRPYKQQNQVKFLGRRSKQAQMKVEKMRKVYLAKEKNTSEVTEPKTGPSGTKDNYHLHSIF.

The interval 306 to 332 (EKNTSEVTEPKTGPSGTKDNYHLHSIF) is disordered.

This is an uncharacterized protein from Homo sapiens (Human).